Here is a 584-residue protein sequence, read N- to C-terminus: Long-chain-fatty-acid--AMP ligase FadD26 (584 aa).

Belongs to the ATP-dependent AMP-binding enzyme family.

It carries out the reaction holo-[(phenol)carboxyphthiodiolenone synthase] + a long-chain fatty acid + ATP = a long-chain fatty acyl-[(phenol)carboxyphthiodiolenone synthase] + AMP + diphosphate. The catalysed reaction is eicosanoate + holo-[(phenol)carboxyphthiodiolenone synthase] + ATP = icosanoyl-[(phenol)carboxyphthiodiolenone synthase] + AMP + diphosphate. It catalyses the reaction holo-[(phenol)carboxyphthiodiolenone synthase] + docosanoate + ATP = docosanoyl-[(phenol)carboxyphthiodiolenone synthase] + AMP + diphosphate. It participates in lipid metabolism; fatty acid biosynthesis. In terms of biological role, catalyzes the activation of long-chain fatty acids as acyl-adenylates (acyl-AMP), which are then transferred to the multifunctional polyketide synthase PpsA for further chain extension. Catalyzes the adenylation of the long-chain fatty acids eicosanoate (C20) or docosanoate (C22), and potentially the very-long-chain fatty acid lignocerate (C24). Involved in the biosynthesis of phthiocerol dimycocerosate (DIM A) and phthiodiolone dimycocerosate (DIM B). The chain is Long-chain-fatty-acid--AMP ligase FadD26 from Mycobacterium marinum (strain ATCC BAA-535 / M).